The chain runs to 145 residues: uncharacterized protein (145 aa).

This sequence belongs to the SAP18 family.

The protein resides in the cytoplasm. It localises to the nucleus. This is an uncharacterized protein from Schizosaccharomyces pombe (strain 972 / ATCC 24843) (Fission yeast).